Consider the following 399-residue polypeptide: MSIISTQLNAIKPSPTLAVVRKTLELKRAGIDIIALGAGEPDFDTPDNIKEAAIKAIKDGFTKYTNVEGIPALKEAIQAKFKRENNIDYDLEEIIVSTGGKQVIYNLFMASLNKGDEVIIPAPYWVSYPDMVLLAEGTPVFANCGIESNFKLSGEALEQLITPKTKWLIINSPSNPTGASYSHSELKNIAEVLRKHPYVNVMSDDIYEHITFDGFKFYTLAEIAPDLKDRIFTVNGVSKAYSMTGWRIGYGAGSKALIKAMTIIQSQSTSNPCSISQVAAVEALNGVQGYIAQNALNFEKKRDLALSILQRVKYFECYKPEGAFYLFIKCDKIFGAKTKSGKVINNSNDFGEYLLEEAKVAVVPGIAFGLEGYFRISYATSMEELEEACLRMERACGSL.

Residues glycine 39, tryptophan 125, and asparagine 175 each coordinate L-aspartate. An N6-(pyridoxal phosphate)lysine modification is found at lysine 239. An L-aspartate-binding site is contributed by arginine 375.

Belongs to the class-I pyridoxal-phosphate-dependent aminotransferase family. Homodimer. Pyridoxal 5'-phosphate serves as cofactor.

Its subcellular location is the cytoplasm. The enzyme catalyses L-aspartate + 2-oxoglutarate = oxaloacetate + L-glutamate. It carries out the reaction L-arogenate + 2-oxoglutarate = prephenate + L-glutamate. Functionally, catalyzes the reversible conversion of aspartate and 2-oxoglutarate to glutamate and oxaloacetate. Can also transaminate prephenate in the presence of glutamate. This is Probable aspartate/prephenate aminotransferase (aatA) from Rickettsia bellii (strain RML369-C).